A 355-amino-acid polypeptide reads, in one-letter code: Chorismate synthase (355 aa).

An NADP(+)-binding site is contributed by Arg-46. FMN-binding positions include 123–125 (RAS), 233–234 (NG), Gly-273, 288–292 (KPTPS), and Arg-314.

This sequence belongs to the chorismate synthase family. Homotetramer. It depends on FMNH2 as a cofactor.

The catalysed reaction is 5-O-(1-carboxyvinyl)-3-phosphoshikimate = chorismate + phosphate. The protein operates within metabolic intermediate biosynthesis; chorismate biosynthesis; chorismate from D-erythrose 4-phosphate and phosphoenolpyruvate: step 7/7. Functionally, catalyzes the anti-1,4-elimination of the C-3 phosphate and the C-6 proR hydrogen from 5-enolpyruvylshikimate-3-phosphate (EPSP) to yield chorismate, which is the branch point compound that serves as the starting substrate for the three terminal pathways of aromatic amino acid biosynthesis. This reaction introduces a second double bond into the aromatic ring system. This chain is Chorismate synthase, found in Campylobacter concisus (strain 13826).